Here is a 93-residue protein sequence, read N- to C-terminus: Large ribosomal subunit protein uL23cz/uL23cy (93 aa).

It belongs to the universal ribosomal protein uL23 family. In terms of assembly, part of the 50S ribosomal subunit.

The protein resides in the plastid. It localises to the chloroplast. Functionally, binds to 23S rRNA. The polypeptide is Large ribosomal subunit protein uL23cz/uL23cy (rpl23-A) (Populus alba (White poplar)).